The primary structure comprises 277 residues: MEMO1 family protein TM_0087 (277 aa).

The protein belongs to the MEMO1 family.

The chain is MEMO1 family protein TM_0087 from Thermotoga maritima (strain ATCC 43589 / DSM 3109 / JCM 10099 / NBRC 100826 / MSB8).